We begin with the raw amino-acid sequence, 1568 residues long: Myosin-2 (1568 aa).

The 54-residue stretch at 4–57 (EVGTRCWYPHKELGWIGAEVIKNEVKDGKYHLELSLEDDEVVSVDTEDLNDDKN) folds into the Myosin N-terminal SH3-like domain. Residues 70–783 (EATEDLTSLS…MLAYLEKLRS (714 aa)) enclose the Myosin motor domain. Position 164–171 (164–171 (GESGAGKT)) interacts with ATP. Residues 443–523 (FIGVLDIYGF…LGILSLLDEE (81 aa)) are actin-binding. The tract at residues 619 to 641 (KKAELEQNNPGNKKPGPARTVNR) is disordered. IQ domains are found at residues 786-808 (MHNSIVTIQKKIRAKYYRNQYLK), 809-833 (ISQAIKIWQSNTRGFIIRHRVYHEM), 834-856 (KVHSATLIQATYRGYAIRKNVFN), 857-881 (VLITIINLQTRIREELKRKQLKREH), 882-904 (EYNAAVTIQSKVRTFEPRSTFLN), and 905-934 (TKRDTVVVQSLIRRRAAQGRLRQLKSDAKS). Residues 944 to 1088 (KLENKVIELT…ISRLQTAMSL (145 aa)) adopt a coiled-coil conformation. The tract at residues 1089–1568 (GTVTTSVLPQ…VAQQVVQDGH (480 aa)) is non alpha-helical, tail domain. Positions 1223 to 1498 (AQVLTTIQKV…LRYVADIVKK (276 aa)) constitute a Dilute domain.

This sequence belongs to the TRAFAC class myosin-kinesin ATPase superfamily. Myosin family. As to quaternary structure, homodimer. Interacts with calmodulin (CMD1) and the myosin light chain MLC1 through its IQ repeats.

Functionally, myosin heavy chain that is required for the cell cycle-regulated transport of various organelles and proteins for their segregation. Functions by binding with its tail domain to receptor proteins on organelles and exerting force with its N-terminal motor domain against actin filaments, thereby transporting its cargo along polarized actin cables. This chain is Myosin-2 (MYO2), found in Saccharomyces uvarum (strain ATCC 76518 / CBS 7001 / CLIB 283 / NBRC 10550 / MCYC 623 / NCYC 2669 / NRRL Y-11845) (Yeast).